Consider the following 354-residue polypeptide: Kelch domain-containing protein 8B (354 aa).

8 Kelch repeats span residues 1–31 (MAAGGGQAFAWQVFPPMPTCRVYGTVAHQDG), 32–79 (HLLV…VLGK), 81–127 (VLVV…ERDG), 128–175 (MVYA…LHGN), 176–222 (KIYV…MAEG), 224–281 (VFSL…SLGG), 282–329 (NIVA…QAGP), and 331–354 (LFVIGGVAQGPSQAVEALCLRDGV).

The protein resides in the cytoplasm. It is found in the midbody. Involved in pinching off the separated nuclei at the cleavage furrow and in cytokinesis. Required for mitotic integrity and maintenance of chromosomal stability. Protects cells against mitotic errors, centrosomal amplification, micronucleus formation and aneuploidy. Plays a key role of midbody function involving abscission of the daughter cells during cytokinesis and appropriate chromosomal and nuclear segregation into the daughter cells. In Rattus norvegicus (Rat), this protein is Kelch domain-containing protein 8B (Klhdc8b).